The following is a 188-amino-acid chain: Adrenodoxin, mitochondrial (188 aa).

The transit peptide at 1-64 directs the protein to the mitochondrion; the sequence is MAAAPGARLL…RPLSVSARAR (64 aa). Serine 67 carries the post-translational modification Phosphoserine. A 2Fe-2S ferredoxin-type domain is found at 69-175; sequence DKITVHFKNR…NMTVRVPEAV (107 aa). At lysine 70 the chain carries N6-acetyllysine; alternate. At lysine 70 the chain carries N6-succinyllysine; alternate. [2Fe-2S] cluster contacts are provided by cysteine 110, cysteine 116, cysteine 119, and cysteine 156. Residue lysine 162 is modified to N6-succinyllysine. Serine 181 carries the phosphoserine modification.

It belongs to the adrenodoxin/putidaredoxin family. As to quaternary structure, interacts with CYP11A1. [2Fe-2S] cluster serves as cofactor.

The protein resides in the mitochondrion matrix. Functionally, essential for the synthesis of various steroid hormones, participates in the reduction of mitochondrial cytochrome P450 for steroidogenesis. Transfers electrons from adrenodoxin reductase to CYP11A1, a cytochrome P450 that catalyzes cholesterol side-chain cleavage. Does not form a ternary complex with adrenodoxin reductase and CYP11A1 but shuttles between the two enzymes to transfer electrons. This is Adrenodoxin, mitochondrial (Fdx1) from Mus musculus (Mouse).